The sequence spans 334 residues: Nucleoid-associated protein PFL_1060 (334 aa).

Belongs to the YejK family.

Its subcellular location is the cytoplasm. The protein localises to the nucleoid. The protein is Nucleoid-associated protein PFL_1060 of Pseudomonas fluorescens (strain ATCC BAA-477 / NRRL B-23932 / Pf-5).